We begin with the raw amino-acid sequence, 1311 residues long: Protein PARALOG OF AIPP2 (1311 aa).

Disordered stretches follow at residues 1-21, 114-141, and 178-280; these read MADR…KVES, ISDD…VSAS, and GNKD…EMVE. The span at 213–240 shows a compositional bias: basic and acidic residues; the sequence is NHDDRVSSEKGNFKEKSRPGGNKERQEP. The span at 258–270 shows a compositional bias: low complexity; that stretch reads SKSSSSNSSAVSE. Residues 283–334 form a PHD-type zinc finger; it reads VKVCDICGDAGREDLLAICSGCSDGAEHTYCMREMLDEVPEGDWLCEECAEE. Residues cysteine 286, cysteine 289, cysteine 301, cysteine 304, histidine 310, cysteine 313, cysteine 328, and cysteine 331 each contribute to the Zn(2+) site. Residues 328 to 348 adopt a coiled-coil conformation; sequence CEECAEEAEKQKQEAKRKRET. Disordered regions lie at residues 369 to 390, 411 to 440, 460 to 701, 975 to 1050, 1059 to 1078, 1087 to 1138, 1152 to 1186, and 1249 to 1311; these read PDAK…ILPR, NHQT…FLKS, HPRQ…EDLN, TNPQ…PSKK, EAGV…GDSL, EQEL…NPAN, NDGL…GIMK, and LSRS…DLPR. Residues 411–431 show a composition bias toward polar residues; it reads NHQTSFSDDTESARSAGSQLQ. Basic and acidic residues predominate over residues 460–472; sequence HPRQKTGKEDTAL. Positions 487–502 are enriched in polar residues; it reads PSRTTDAGNSGGSDSQ. Over residues 512-528 the composition is skewed to basic and acidic residues; the sequence is HSQEGKSLKQVKDRNRE. Polar residues predominate over residues 529–552; sequence ANASASSIDQKLKSRGNSSVSHAN. Residues 553–566 are compositionally biased toward basic and acidic residues; it reads NNRDLKGLQSDGKR. Positions 569-607 are enriched in polar residues; it reads LTKQVSNLSRNRLENSVVSGGDISTNEKCSASEQSSSQA. Residues 640-653 show a composition bias toward basic and acidic residues; sequence VPREVGKKSKEAFS. Polar residues-rich tracts occupy residues 668–694, 977–988, and 1014–1025; these read PSSQ…STTK, PQKNTSLPTSNV, and LRESSSNGIETR. The segment covering 1026-1050 has biased composition (basic and acidic residues); that stretch reads NGTDARSHENPNNRESSIERSPSKK. The span at 1087–1096 shows a compositional bias: basic and acidic residues; it reads EQELGGRKDL. Positions 1250 to 1263 are enriched in polar residues; the sequence is SRSSNSGEQSNNSM. The stretch at 1256-1276 forms a coiled coil; it reads GEQSNNSMNKEKQKADEEEED. Residues 1280-1289 show a composition bias toward low complexity; that stretch reads VAASLSLSLS.

In terms of assembly, part of the BAH-PHD bivalent histone reader complex that contains AIPP2, PAIPP2 and AIPP3/BDT1; the BAH-PHD module associates with CPL2 to form the BAH-PHD-CPL2 complex (BPC) for transcriptional repression. Binds directly to AIPP3/BDT1 and CPL2, but not to AIPP2. As to expression, expressed ubiquitously.

Functionally, together with AIPP2 and AIPP3/BDT1, cooperates to form a BAH-PHD bivalent histone reader complex able to read histone H3 lysine 27 trimethylation (H3K27me3) and low-methylated H3K4 histone marks in order to regulate transcription, especially to prevent early flowering; promotes AIPP3/BDT1 binding to H3K27me3. CPL2 is subsequently recruited to form a BAH-PHD-CPL2 complex (BPC) in order to silence several H3K27me3 and low-methylated H3K4 enriched loci, including AGO5, via the phosphorylation state-dependent inhibition of Pol II release from the transcriptional start site (e.g. Ser5P-Pol II dephosphorylation). The BPC complex represses flowering by inhibiting the expression of several genes, including AGL6, FT, FUL and SOC1. The sequence is that of Protein PARALOG OF AIPP2 from Arabidopsis thaliana (Mouse-ear cress).